The sequence spans 885 residues: Putative membrane protein YdgH (885 aa).

7 helical membrane passes run 9–29 (WAIA…SPNL), 181–201 (IIGL…PIVV), 202–222 (VGFS…NVDF), 227–247 (FTQT…CILL), 278–298 (ISGF…FAIF), 304–324 (VAVG…LFMV), and 354–374 (VARP…FILT). The tract at residues 498–518 (MAGQTGSASNGGSGGSLGDAA) is disordered. 5 helical membrane-spanning segments follow: residues 716-736 (MVIM…SMIM), 740-760 (MIAS…LIFV), 772-792 (VPFF…IFLL), 817-837 (VIIT…PSGV), and 847-867 (IIIG…PAII).

The protein belongs to the resistance-nodulation-cell division (RND) (TC 2.A.6) family. MmpL subfamily.

The protein localises to the cell membrane. The sequence is that of Putative membrane protein YdgH (ydgH) from Bacillus subtilis (strain 168).